Reading from the N-terminus, the 332-residue chain is GTP 3',8-cyclase (332 aa).

The Radical SAM core domain occupies 9–234 (TFGRRISYLR…DSDHRTGGPS (226 aa)). Arg-18 provides a ligand contact to GTP. [4Fe-4S] cluster-binding residues include Cys-25 and Cys-29. Residue Tyr-31 participates in S-adenosyl-L-methionine binding. Residue Cys-32 coordinates [4Fe-4S] cluster. Residue Arg-67 participates in GTP binding. Gly-71 contributes to the S-adenosyl-L-methionine binding site. Thr-100 serves as a coordination point for GTP. Ser-124 provides a ligand contact to S-adenosyl-L-methionine. Lys-160 provides a ligand contact to GTP. Met-194 lines the S-adenosyl-L-methionine pocket. 2 residues coordinate [4Fe-4S] cluster: Cys-257 and Cys-260. 262–264 (RVR) contributes to the GTP binding site. Residue Cys-274 participates in [4Fe-4S] cluster binding.

The protein belongs to the radical SAM superfamily. MoaA family. Monomer and homodimer. The cofactor is [4Fe-4S] cluster.

The enzyme catalyses GTP + AH2 + S-adenosyl-L-methionine = (8S)-3',8-cyclo-7,8-dihydroguanosine 5'-triphosphate + 5'-deoxyadenosine + L-methionine + A + H(+). Its pathway is cofactor biosynthesis; molybdopterin biosynthesis. In terms of biological role, catalyzes the cyclization of GTP to (8S)-3',8-cyclo-7,8-dihydroguanosine 5'-triphosphate. The chain is GTP 3',8-cyclase from Erythrobacter litoralis (strain HTCC2594).